The sequence spans 453 residues: Cholecystokinin receptor (453 aa).

Over 1 to 64 the chain is Extracellular; sequence MESLRSLSNI…ILDRKKPSPS (64 aa). Residues asparagine 9, asparagine 22, asparagine 30, asparagine 35, and asparagine 39 are each glycosylated (N-linked (GlcNAc...) asparagine). Residues 65 to 94 form a helical membrane-spanning segment; sequence DLNLWVRIVMYSVIFLLSVFGNTLIIIVLV. Topologically, residues 95 to 104 are cytoplasmic; that stretch reads MNKRLRTITN. The chain crosses the membrane as a helical span at residues 105-131; sequence SFLLSLALSDLMVAVLCMPFTLIPNLM. Residues 132–142 are Extracellular-facing; the sequence is ENFIFGEVICR. The cysteines at positions 141 and 223 are disulfide-linked. The chain crosses the membrane as a helical span at residues 143-164; the sequence is AAAYFMGLSVSVSTFNLVAISI. At 165–184 the chain is on the cytoplasmic side; it reads ERYSAICNPLKSRVWQTRSH. Residues 185-205 form a helical membrane-spanning segment; it reads AYRVIAATWVLSSIIMIPYLV. Residues 206–237 lie on the Extracellular side of the membrane; that stretch reads YNKTVTFPMKDRRVGHQCRLVWPSKQVQQAWY. Residues 238–261 traverse the membrane as a helical segment; the sequence is VLLLTILFFIPGVVMIVAYGLISR. Over 262-343 the chain is Cytoplasmic; sequence ELYRGIQFEM…KLMAKKRVIR (82 aa). The helical transmembrane segment at 344 to 364 threads the bilayer; sequence MLIVIVAMFFICWMPIFVANT. Topologically, residues 365-379 are extracellular; the sequence is WKAFDELSAFNTLTG. The chain crosses the membrane as a helical span at residues 380–403; that stretch reads APISFIHLLSYTSACVNPLIYCFM. Cysteine 401 carries S-palmitoyl cysteine lipidation. Residues 404-453 are Cytoplasmic-facing; sequence NKRFRKAFLGTFSSCIKPCRNFRDTDEDIAATGASLSKFSYTTVSSLGPA.

Belongs to the G-protein coupled receptor 1 family. Brain and stomach.

Its subcellular location is the cell membrane. Receptor for cholecystokinin. This receptor mediates its action by association with G proteins that activate a phosphatidylinositol-calcium second messenger system. Has high affinity for CCK-8 and low affinities for gastrin-17-I, CCK-4, and unsulfated CCK-8. The protein is Cholecystokinin receptor (cckar) of Xenopus laevis (African clawed frog).